Reading from the N-terminus, the 89-residue chain is Small ribosomal subunit protein uS17 (89 aa).

It belongs to the universal ribosomal protein uS17 family. In terms of assembly, part of the 30S ribosomal subunit.

Its function is as follows. One of the primary rRNA binding proteins, it binds specifically to the 5'-end of 16S ribosomal RNA. This Bdellovibrio bacteriovorus (strain ATCC 15356 / DSM 50701 / NCIMB 9529 / HD100) protein is Small ribosomal subunit protein uS17.